Here is a 221-residue protein sequence, read N- to C-terminus: UPF0758 protein KPN78578_39390 (221 aa).

Positions 99–221 (ALVTPSMTRE…YVSFAERGWI (123 aa)) constitute an MPN domain. Zn(2+) contacts are provided by H170, H172, and D183. Positions 170–183 (HNHPSGSPEPSQAD) match the JAMM motif motif.

This sequence belongs to the UPF0758 family. YicR subfamily.

The protein is UPF0758 protein KPN78578_39390 of Klebsiella pneumoniae subsp. pneumoniae (strain ATCC 700721 / MGH 78578).